Reading from the N-terminus, the 365-residue chain is Probable dual-specificity RNA methyltransferase RlmN (365 aa).

Residue Glu-106 is the Proton acceptor of the active site. The region spanning 112-352 (YPDRVTLCVS…VTVRDTRGRE (241 aa)) is the Radical SAM core domain. Cys-119 and Cys-357 are joined by a disulfide. Residues Cys-126, Cys-130, and Cys-133 each coordinate [4Fe-4S] cluster. S-adenosyl-L-methionine-binding positions include 181-182 (GE), Ser-215, 238-240 (SLH), and Asn-314. Cys-357 acts as the S-methylcysteine intermediate in catalysis.

Belongs to the radical SAM superfamily. RlmN family. It depends on [4Fe-4S] cluster as a cofactor.

It localises to the cytoplasm. The enzyme catalyses adenosine(2503) in 23S rRNA + 2 reduced [2Fe-2S]-[ferredoxin] + 2 S-adenosyl-L-methionine = 2-methyladenosine(2503) in 23S rRNA + 5'-deoxyadenosine + L-methionine + 2 oxidized [2Fe-2S]-[ferredoxin] + S-adenosyl-L-homocysteine. It catalyses the reaction adenosine(37) in tRNA + 2 reduced [2Fe-2S]-[ferredoxin] + 2 S-adenosyl-L-methionine = 2-methyladenosine(37) in tRNA + 5'-deoxyadenosine + L-methionine + 2 oxidized [2Fe-2S]-[ferredoxin] + S-adenosyl-L-homocysteine. Its function is as follows. Specifically methylates position 2 of adenine 2503 in 23S rRNA and position 2 of adenine 37 in tRNAs. The polypeptide is Probable dual-specificity RNA methyltransferase RlmN (Thermobifida fusca (strain YX)).